We begin with the raw amino-acid sequence, 513 residues long: Flagellin A (513 aa).

It belongs to the bacterial flagellin family. As to quaternary structure, heteromer of FlaA and FlaB. FlaB is located proximal to the hook while the remainder of the filament is composed of the predominant FlaA.

It is found in the secreted. Its subcellular location is the bacterial flagellum. Its function is as follows. Flagellin is the subunit protein which polymerizes to form the filaments of bacterial flagella. Important for motility and virulence. This Helicobacter felis (strain ATCC 49179 / CCUG 28539 / NCTC 12436 / CS1) protein is Flagellin A (flaA).